A 288-amino-acid chain; its full sequence is Small ribosomal subunit protein uS3 (288 aa).

In terms of domain architecture, KH type-2 spans 38 to 106 (IRRMMSKGLE…QVQLNIIEVK (69 aa)). The interval 209-288 (PGRETPAEAP…TQPAETQQEG (80 aa)) is disordered. The span at 219 to 232 (SRPRRERGDRSERP) shows a compositional bias: basic and acidic residues. Residues 249-264 (AGRAAATTIAQAAETP) show a composition bias toward low complexity. Residues 277-288 (AATQPAETQQEG) show a composition bias toward polar residues.

Belongs to the universal ribosomal protein uS3 family. As to quaternary structure, part of the 30S ribosomal subunit. Forms a tight complex with proteins S10 and S14.

Its function is as follows. Binds the lower part of the 30S subunit head. Binds mRNA in the 70S ribosome, positioning it for translation. The chain is Small ribosomal subunit protein uS3 from Salinispora arenicola (strain CNS-205).